An 823-amino-acid polypeptide reads, in one-letter code: MDIKLDPSRDDLPLMANTSHMLVKHYILDLDVDFGNQVIEGNIVLFFGDGNRFKNQSRSTQETFQMESEEADIFRTAEPCHVPEMDSSTFSPKMGHRECAVCGKGDQDAFDNDGNHDNQERDSEISSSKYCCDTGNHGKRDFLLVLDCCDLSVLKVEEVDVAAVPGLEKFTKAPKLLATPEKLRCEIVRDLVALPADAWREQLDCYTRCSQAPGCGELLIDSDNWSLRIRKTGTSTPADFPRAIRIWYKTKPEGQSVAWTTDQNGRPCVYTMGSPINNRALFPCQEPPVAMSTWQATVRAAASFVVLMSGENSAKPTPLREGYMSWHYYVTMPMPASTFAIAVGCWTEMKPKASPPDDLMTEHSLPLSPSEADLRYDNTCNHMEYPCRFQSASAASQDIIPYRVFAPVCLEGACQEALLWLIPSCLSAAHSVLGTHPFSRLDILIVPTNFPSLGMASPHIIFLSQSTLTGTSHLCGTRLCHEIAHSWFGLAIGARDWTEEWLSEGFATHLEDIFWAEAQQLPPHEALEQQELRACLRWHRLQDELRNSPEGMQVLRPNKEETGHVSASGASVVKHGLNPEKGFMQVHYLKGYFLLRFLTRTLGEKIYFPFLRKFVHLFHGQLILSQDFLQMLLENIPENKRLGLSVENIVRDWLECSGIPKALQEERKAEDCSPSRLARQVGSEVAKWIRVNRRPRKRKRGKREVAFEKLSPDQIVLLLEWLLEQKTLSPQTLHCLQQTYHLPEQDAEVRHRWCELVIKHKYTKAYNQVERFLLEDQAMGIYLYGELMVSEDARLQQLAHRCFELVKEHMDRASAQVVTEMLF.

His481 contacts Zn(2+). The Proton acceptor role is filled by Glu482. Residues His485 and Glu504 each contribute to the Zn(2+) site. The short motif at 693–703 (RRPRKRKRGKR) is the Nucleolar localization signal element.

The protein belongs to the peptidase M1 family. The cofactor is Zn(2+). As to expression, expressed in testis, heart, brain, lung, liver, skeletal muscle, kidney and ovary. Expressed in vascular tissues.

It localises to the nucleus. It is found in the nucleolus. Its subcellular location is the cytoplasm. Aminopeptidase which catalyzes the hydrolysis of amino acid residues from the N-terminus of peptide or protein substrates. The polypeptide is Aminopeptidase O (Aopep) (Mus musculus (Mouse)).